The primary structure comprises 82 residues: ATP synthase subunit c (82 aa).

A run of 2 helical transmembrane segments spans residues 3-23 (PLIA…ASLG) and 57-77 (LAFM…LLFA).

As to quaternary structure, F-type ATPases have 2 components, F(1) - the catalytic core - and F(0) - the membrane proton channel. F(1) has five subunits: alpha(3), beta(3), gamma(1), delta(1), epsilon(1). F(0) has four main subunits: a(1), b(1), b'(1) and c(10-14). The alpha and beta chains form an alternating ring which encloses part of the gamma chain. F(1) is attached to F(0) by a central stalk formed by the gamma and epsilon chains, while a peripheral stalk is formed by the delta, b and b' chains.

It is found in the cellular thylakoid membrane. Inhibited by dicyclohexylcarbodiimide. In terms of biological role, f(1)F(0) ATP synthase produces ATP from ADP in the presence of a proton or sodium gradient. F-type ATPases consist of two structural domains, F(1) containing the extramembraneous catalytic core and F(0) containing the membrane proton channel, linked together by a central stalk and a peripheral stalk. During catalysis, ATP synthesis in the catalytic domain of F(1) is coupled via a rotary mechanism of the central stalk subunits to proton translocation. Key component of the F(0) channel; it plays a direct role in translocation across the membrane. A homomeric c-ring of between 10-14 subunits forms the central stalk rotor element with the F(1) delta and epsilon subunits. Its function is as follows. The complex from the organism is particularly stable to disruption and remains functional after 6 hrs at 55 degrees Celsius. The sequence is that of ATP synthase subunit c (atpE) from Thermosynechococcus vestitus (strain NIES-2133 / IAM M-273 / BP-1).